Consider the following 622-residue polypeptide: Polymerase acidic protein (622 aa).

The protein belongs to the influenza viruses PA family. In terms of assembly, RNA polymerase is composed of three subunits: PA, PB1 and PB2.

The protein resides in the virion. It is found in the host nucleus. Its function is as follows. subunit of the RNA-dependent RNA polymerase which is responsible for replication and transcription of virus RNA segments. The transcription of viral mRNAs occurs by a unique mechanism called cap-snatching. 5' methylated caps of cellular mRNAs are cleaved after 10-13 nucleotides by PA. In turn, these short capped RNAs are used as primers by PB1 for transcription of viral mRNAs. During virus replication, PB1 initiates RNA synthesis and copy vRNA into complementary RNA (cRNA) which in turn serves as a template for the production of more vRNAs. This Thogoto virus (isolate SiAr 126) (Tho) protein is Polymerase acidic protein.